The sequence spans 80 residues: SPbeta prophage-derived uncharacterized HTH-type transcriptional regulator YotL (80 aa).

The region spanning 12–67 is the HTH cro/C1-type domain; the sequence is LNELMHEYSVSIEDLVECTGLSKQRINDYVGGFKSNMNIGTAMTFADAIGCSIEEL. A DNA-binding region (H-T-H motif) is located at residues 23-42; sequence IEDLVECTGLSKQRINDYVG.

This is SPbeta prophage-derived uncharacterized HTH-type transcriptional regulator YotL (yotL) from Bacillus subtilis (strain 168).